Consider the following 131-residue polypeptide: uncharacterized protein (131 aa).

Transmembrane regions (helical) follow at residues 52–72 and 97–117; these read LIMI…FYLV and SDII…YDVG.

Its subcellular location is the membrane. This is an uncharacterized protein from Acanthamoeba polyphaga mimivirus (APMV).